The sequence spans 101 residues: UPF0751 protein DSY3086 (101 aa).

Belongs to the UPF0751 family.

The chain is UPF0751 protein DSY3086 from Desulfitobacterium hafniense (strain Y51).